Consider the following 211-residue polypeptide: MISYYFQGFALGAAMILPLGPQNAFVMNQGIRRQYHLMIALLCALSDLVLISAGIFGGSALLMQSPWLLALVTWGGVAFLLWYGLGALKTAMSSNLELASAEVMKQGRWKIIATMLAVTWLNPHVYLDTFVVLGSLGGQLAMEPKRWFALGTISASFLWFFGLALLAAWLAPRLRTAKAQRIINILVGVVMWLIAFQLAREGVAHMHALFN.

6 consecutive transmembrane segments (helical) span residues 1 to 21 (MISYYFQGFALGAAMILPLGP), 37 to 57 (LMIALLCALSDLVLISAGIFG), 68 to 88 (LLALVTWGGVAFLLWYGLGAL), 111 to 131 (IIATMLAVTWLNPHVYLDTFV), 147 to 167 (WFALGTISASFLWFFGLALLA), and 179 to 199 (AQRIINILVGVVMWLIAFQLA).

Belongs to the LysE/ArgO transporter (TC 2.A.75) family.

The protein resides in the cell inner membrane. It catalyses the reaction L-arginine(in) = L-arginine(out). Involved in the export of arginine. Important to control the intracellular level of arginine and the correct balance between arginine and lysine. This chain is Arginine exporter protein ArgO, found in Salmonella enteritidis PT4 (strain P125109).